Consider the following 147-residue polypeptide: Protein MC014 (147 aa).

The protein localises to the host nucleus. This is Protein MC014 (MC014) from Homo sapiens (Human).